The following is a 436-amino-acid chain: GTPase Der (436 aa).

EngA-type G domains are found at residues 4–167 and 176–351; these read PIVA…GEEE and IRLS…ENHK. Residues 10-17, 57-61, 119-122, 182-189, 229-233, and 294-297 each bind GTP; these read GRPNVGKS, DTGGI, NKVD, DTAGM, and NKWD. A KH-like domain is found at 352 to 436; that stretch reads KRVQSSTLNE…PIHIIARKRN (85 aa).

It belongs to the TRAFAC class TrmE-Era-EngA-EngB-Septin-like GTPase superfamily. EngA (Der) GTPase family. Associates with the 50S ribosomal subunit.

Its function is as follows. GTPase that plays an essential role in the late steps of ribosome biogenesis. The sequence is that of GTPase Der from Staphylococcus aureus (strain USA300).